The primary structure comprises 229 residues: Non-structural protein P8 (229 aa).

Helical transmembrane passes span 119–139 (IIHMTLLIAAVVALLTSVCTL) and 162–182 (SLNPMLGVVNLGATFLMMVCA).

The protein belongs to the orbivirus NS3 family. As to quaternary structure, forms homooligomers via coiled-coil motif. Interacts with host OPTN; this interaction inhibits innate immune response.

The protein resides in the host cell membrane. It is found in the host Golgi apparatus. Plays a role in the inhibition of host innate immune response. Interacts with host OPTN and thus inhibits the recruitment of TBK1 to the host Golgi apparatus. In turn, downstream partner IRF3 cannot be activated and IFN-beta production is impaired. Functionally, facilitates viral particle release either by increasing plasma membrane permeability through a viroporin-like activity or by viral budding. The polypeptide is Non-structural protein P8 (Segment-10) (Antilocapra americana (Pronghorn)).